A 158-amino-acid polypeptide reads, in one-letter code: Placenta growth factor (158 aa).

An N-terminal signal peptide occupies residues 1–18; it reads MLVMKLFTCFLQVLAGLA. N-linked (GlcNAc...) asparagine glycans are attached at residues asparagine 29 and asparagine 30. Cystine bridges form between cysteine 48–cysteine 90, cysteine 79–cysteine 125, and cysteine 83–cysteine 127. Asparagine 97 is a glycosylation site (N-linked (GlcNAc...) asparagine). Residues 136–158 are disordered; it reads AERRKTKGKRKRSRNSQTEEPHP. Residues 137 to 149 are compositionally biased toward basic residues; the sequence is ERRKTKGKRKRSR.

This sequence belongs to the PDGF/VEGF growth factor family. Antiparallel homodimer; disulfide-linked. Also found as heterodimer with VEGFA/VEGF.

The protein localises to the secreted. Growth factor active in angiogenesis and endothelial cell growth, stimulating their proliferation and migration. It binds to the receptor FLT1/VEGFR-1. Also promotes cell tumor growth. The chain is Placenta growth factor (Pgf) from Mus musculus (Mouse).